We begin with the raw amino-acid sequence, 549 residues long: Beta-mannosyltransferase 3 (549 aa).

At 1–37 the chain is on the cytoplasmic side; the sequence is MFESDLSFYSALLILCCPISIVFFKKFPIKGYTGANK. A helical transmembrane segment spans residues 38–58; it reads VSLFLQCLIAILNLNILYSFI. At 59–549 the chain is on the extracellular side; the sequence is NSLTITLGHD…DTMGWDKLSR (491 aa).

Belongs to the BMT family.

Its subcellular location is the membrane. Functionally, beta-mannosyltransferase involved in cell wall biosynthesis. Required for addition of the second beta-mannose residue to acid-stable fraction of cell wall phosphopeptidomannan, and in elongation of beta-mannose chains on the phosphopeptidomannan acid-labile fraction. The chain is Beta-mannosyltransferase 3 (BMT3) from Candida albicans (strain SC5314 / ATCC MYA-2876) (Yeast).